The chain runs to 123 residues: Small ribosomal subunit protein uS12cz/uS12cy (123 aa).

The protein belongs to the universal ribosomal protein uS12 family. As to quaternary structure, part of the 30S ribosomal subunit.

It localises to the plastid. The protein resides in the chloroplast. Its function is as follows. With S4 and S5 plays an important role in translational accuracy. Located at the interface of the 30S and 50S subunits. In Gossypium hirsutum (Upland cotton), this protein is Small ribosomal subunit protein uS12cz/uS12cy (rps12-A).